We begin with the raw amino-acid sequence, 197 residues long: Probable GTP-binding protein EngB (197 aa).

Positions 25-197 (SAPEIAFAGR…VRDEFFKFTR (173 aa)) constitute an EngB-type G domain. GTP-binding positions include 33-40 (GRSNVGKS), 60-64 (GCTRQ), 79-82 (DLPG), 146-149 (TKID), and 177-179 (ISV). Residues S40 and T62 each contribute to the Mg(2+) site.

Belongs to the TRAFAC class TrmE-Era-EngA-EngB-Septin-like GTPase superfamily. EngB GTPase family. Requires Mg(2+) as cofactor.

Functionally, necessary for normal cell division and for the maintenance of normal septation. In Wolbachia sp. subsp. Brugia malayi (strain TRS), this protein is Probable GTP-binding protein EngB.